Here is a 1017-residue protein sequence, read N- to C-terminus: Formin-binding protein 4 (1017 aa).

Disordered stretches follow at residues 1–141 and 160–202; these read MGKK…STDI and PAAP…TSGW. Phosphoserine is present on Ser-18. Low complexity predominate over residues 40-69; sequence DSTAAVPSQPAPSAATTTTTAVTAAAASDD. Ser-116 and Ser-124 each carry phosphoserine. Polar residues predominate over residues 130-141; the sequence is SKETNGNQSTDI. Thr-172 is subject to Phosphothreonine. Low complexity predominate over residues 181-200; that stretch reads AATSTLSSSTSNGTDSTQTS. The WW 1 domain maps to 214-248; the sequence is GIEMGDWQEVWDENTGCYYYWNTQTNEVTWELPQY. Lys-290 carries the N6-acetyllysine modification. Lys-301 is covalently cross-linked (Glycyl lysine isopeptide (Lys-Gly) (interchain with G-Cter in SUMO1)). A Glycyl lysine isopeptide (Lys-Gly) (interchain with G-Cter in SUMO2) cross-link involves residue Lys-335. Residue Lys-348 forms a Glycyl lysine isopeptide (Lys-Gly) (interchain with G-Cter in SUMO1); alternate linkage. Residue Lys-348 forms a Glycyl lysine isopeptide (Lys-Gly) (interchain with G-Cter in SUMO2); alternate linkage. Disordered regions lie at residues 421–519, 621–676, 706–792, and 899–994; these read LEEG…TTPK, ESQW…CKES, PLPL…IKRK, and TATI…AERN. Residues Ser-427, Ser-432, Ser-435, Ser-438, and Ser-442 each carry the phosphoserine modification. Polar residues predominate over residues 428 to 442; the sequence is VSGSSPRSDISQPAS. Residues 449–458 show a composition bias toward basic residues; it reads LMSKRGKWKM. Positions 461-474 are enriched in low complexity; sequence RATSPESTSRSSSK. At Ser-464 the chain carries Phosphoserine. Thr-479 bears the Phosphothreonine mark. Residues 491–513 show a composition bias toward basic and acidic residues; the sequence is NSEKIDENSDKEMEVEESPEKIK. Residues Ser-499 and Ser-508 each carry the phosphoserine modification. Phosphothreonine is present on residues Thr-516 and Thr-517. Lys-519 is covalently cross-linked (Glycyl lysine isopeptide (Lys-Gly) (interchain with G-Cter in SUMO1); alternate). A Glycyl lysine isopeptide (Lys-Gly) (interchain with G-Cter in SUMO2); alternate cross-link involves residue Lys-519. Residues 595–629 form the WW 2 domain; that stretch reads NATPKGWSCHWDRDHRRYFYVNEQSGESQWEFPDG. A compositionally biased stretch (acidic residues) spans 627-637; it reads PDGEEEEEESQ. Residues 640-656 show a composition bias toward basic and acidic residues; the sequence is ENRDETLAKQTLKDKTG. Residues 657–671 show a composition bias toward low complexity; that stretch reads TDSNSTESSETSTGS. The span at 706-732 shows a compositional bias: pro residues; that stretch reads PLPLEMPPPPPPPPESPPPPPPPPPPA. Positions 733–748 are enriched in acidic residues; the sequence is EDGEIQEVEMEDEGSE. Over residues 764–786 the composition is skewed to low complexity; that stretch reads SAQTTVVTSQSSVDSTISSSSST. Over residues 904-925 the composition is skewed to pro residues; it reads EPPPPPPPPPPPPPPAPKMPPP. A compositionally biased stretch (basic residues) spans 929–941; the sequence is KKGRKDKAKKSKT. Over residues 957–970 the composition is skewed to acidic residues; the sequence is LDEEDNSSSSEEDR. Residues Ser-963, Ser-964, and Ser-965 each carry the phosphoserine modification. Residues 971–982 are compositionally biased toward basic and acidic residues; it reads ESTAQKRIEEWK.

In terms of assembly, binds FMN1. Interacts with the Arg/Gly-rich-flanked Pro-rich of KHDRBS1/SAM68. Arginine methylation in these regions has no effect on this binding. Highly expressed in the eye.

The protein is Formin-binding protein 4 (FNBP4) of Homo sapiens (Human).